We begin with the raw amino-acid sequence, 345 residues long: Heat-inducible transcription repressor HrcA (345 aa).

Belongs to the HrcA family.

Negative regulator of class I heat shock genes (grpE-dnaK-dnaJ and groELS operons). Prevents heat-shock induction of these operons. This Dehalococcoides mccartyi (strain ATCC BAA-2100 / JCM 16839 / KCTC 5957 / BAV1) protein is Heat-inducible transcription repressor HrcA.